The primary structure comprises 374 residues: Alcohol dehydrogenase 3, mitochondrial (374 aa).

Residues 1–26 (MLRLTSARSIVSPLRKGAFGSIRTLA) constitute a mitochondrion transit peptide. 7 residues coordinate Zn(2+): Cys-70, His-93, Cys-124, Cys-127, Cys-130, Cys-138, and Cys-180. Residues 204-210 (GAAGGLG), Asp-228, Lys-233, 295-297 (VGL), and Arg-367 contribute to the NAD(+) site.

The protein belongs to the zinc-containing alcohol dehydrogenase family. Homotetramer. It depends on Zn(2+) as a cofactor.

It localises to the mitochondrion matrix. It carries out the reaction a primary alcohol + NAD(+) = an aldehyde + NADH + H(+). It catalyses the reaction a secondary alcohol + NAD(+) = a ketone + NADH + H(+). The protein is Alcohol dehydrogenase 3, mitochondrial (ADH3) of Kluyveromyces lactis (strain ATCC 8585 / CBS 2359 / DSM 70799 / NBRC 1267 / NRRL Y-1140 / WM37) (Yeast).